Here is a 629-residue protein sequence, read N- to C-terminus: Acetylcholinesterase (629 aa).

A signal peptide spans 1-38; it reads MGQLSILCLFVTVCASVCGYSWPSDETTTKPSQFKDFH. Cys-103 and Cys-130 form a disulfide bridge. N-linked (GlcNAc...) asparagine glycosylation occurs at Asn-125. Residue Ser-253 is the Acyl-ester intermediate of the active site. A disulfide bond links Cys-307 and Cys-322. Asn-308 is a glycosylation site (N-linked (GlcNAc...) asparagine). Glu-382 (charge relay system) is an active-site residue. N-linked (GlcNAc...) asparagine glycosylation is present at Asn-418. An intrachain disulfide couples Cys-458 to Cys-574. His-496 functions as the Charge relay system in the catalytic mechanism. An N-linked (GlcNAc...) asparagine glycan is attached at Asn-509. Ser-605 carries GPI-anchor amidated serine lipidation. The propeptide at 606-629 is removed in mature form; the sequence is SSNELLPPSTSLVLIWIMTLLNAL.

This sequence belongs to the type-B carboxylesterase/lipase family. In terms of assembly, homodimer; disulfide-linked. Post-translationally, the N-terminus is blocked.

The protein resides in the synapse. The protein localises to the cell membrane. It catalyses the reaction acetylcholine + H2O = choline + acetate + H(+). In terms of biological role, rapidly hydrolyzes choline released into the synapse. The sequence is that of Acetylcholinesterase from Leptinotarsa decemlineata (Colorado potato beetle).